Here is a 79-residue protein sequence, read N- to C-terminus: Small ribosomal subunit protein bS18 (79 aa).

The protein belongs to the bacterial ribosomal protein bS18 family. Part of the 30S ribosomal subunit. Forms a tight heterodimer with protein bS6.

In terms of biological role, binds as a heterodimer with protein bS6 to the central domain of the 16S rRNA, where it helps stabilize the platform of the 30S subunit. The protein is Small ribosomal subunit protein bS18 of Salinispora arenicola (strain CNS-205).